The chain runs to 260 residues: Isoprenyl transferase (260 aa).

Aspartate 38 is an active-site residue. A Mg(2+)-binding site is contributed by aspartate 38. Substrate-binding positions include 39–42 (GNGR), tryptophan 43, arginine 51, histidine 55, and 83–85 (STE). Asparagine 86 functions as the Proton acceptor in the catalytic mechanism. Residues tryptophan 87, arginine 89, arginine 206, and 212–214 (RLS) contribute to the substrate site. Glutamate 225 contributes to the Mg(2+) binding site.

Belongs to the UPP synthase family. Homodimer. Requires Mg(2+) as cofactor.

In terms of biological role, catalyzes the condensation of isopentenyl diphosphate (IPP) with allylic pyrophosphates generating different type of terpenoids. The chain is Isoprenyl transferase from Heliobacterium mobile (Heliobacillus mobilis).